The chain runs to 437 residues: Mitochondrial distribution and morphology protein 12 (437 aa).

The region spanning 1-437 (MSIDINWRTA…VYPSFWTFLI (437 aa)) is the SMP-LTD domain. Acidic residues predominate over residues 73–85 (DDDADTSDVSEDL). 3 disordered regions span residues 73–101 (DDDADTSDVSEDLLSEHSSQWDRTHSELN), 187–274 (SDSG…PPRM), and 354–384 (SEQQQESGGDDHRPRSGADSSAHTSQKRQGG). Residues 91–101 (SQWDRTHSELN) show a composition bias toward basic and acidic residues. Composition is skewed to polar residues over residues 215–240 (DTSNSTSRPSTANTLPSHLSESNNLN) and 371–381 (ADSSAHTSQKR).

The protein belongs to the MDM12 family. In terms of assembly, component of the ER-mitochondria encounter structure (ERMES) or MDM complex, composed of mmm1, mdm10, mdm12 and mdm34. A mmm1 homodimer associates with one molecule of mdm12 on each side in a pairwise head-to-tail manner, and the SMP-LTD domains of mmm1 and mdm12 generate a continuous hydrophobic tunnel for phospholipid trafficking.

The protein localises to the mitochondrion outer membrane. The protein resides in the endoplasmic reticulum membrane. In terms of biological role, component of the ERMES/MDM complex, which serves as a molecular tether to connect the endoplasmic reticulum (ER) and mitochondria. Components of this complex are involved in the control of mitochondrial shape and protein biogenesis, and function in nonvesicular lipid trafficking between the ER and mitochondria. Mdm12 is required for the interaction of the ER-resident membrane protein mmm1 and the outer mitochondrial membrane-resident beta-barrel protein mdm10. The mdm12-mmm1 subcomplex functions in the major beta-barrel assembly pathway that is responsible for biogenesis of all mitochondrial outer membrane beta-barrel proteins, and acts in a late step after the SAM complex. The mdm10-mdm12-mmm1 subcomplex further acts in the TOM40-specific pathway after the action of the mdm12-mmm1 complex. Essential for establishing and maintaining the structure of mitochondria and maintenance of mtDNA nucleoids. The protein is Mitochondrial distribution and morphology protein 12 of Aspergillus clavatus (strain ATCC 1007 / CBS 513.65 / DSM 816 / NCTC 3887 / NRRL 1 / QM 1276 / 107).